The primary structure comprises 542 residues: GATA-type transcription factor sreA (542 aa).

A compositionally biased stretch (polar residues) spans 1–10; it reads MLTLRSSSDT. The tract at residues 1–172 is disordered; it reads MLTLRSSSDT…SAQNASGCGS (172 aa). The span at 44–63 shows a compositional bias: basic and acidic residues; sequence ADLRPDSFDASRSPDGDKAS. 2 stretches are compositionally biased toward low complexity: residues 75–117 and 148–168; these read SSDQ…PKAS and SSTS…QNAS. The interval 178-196 is cystein-rich region (CRR); it reads CPGGGSCNGTGGAVGCDGC. A compositionally biased stretch (low complexity) spans 210–223; that stretch reads APSARQARASPSAQ. The disordered stretch occupies residues 210–248; it reads APSARQARASPSAQTSEEQAQSGLDALDSASQDASGMPK. The GATA-type zinc finger occupies 250–274; sequence CQNCGTTLTPLWRRDDQGNTICNAC. A compositionally biased stretch (basic residues) spans 289–300; that stretch reads MKKTVIKRRKRV. 2 disordered regions span residues 289 to 408 and 461 to 525; these read MKKT…PATR and SNAP…REAE. Polar residues-rich tracts occupy residues 311–320 and 369–387; these read AGSSDNSSVS and KPTQ…NHSP. Residues 396-407 show a composition bias toward low complexity; the sequence is ESTSAESAPPAT. Over residues 464-483 the composition is skewed to polar residues; it reads PARSQTQTQPQPGTRSYSPN. Positions 510–542 form a coiled coil; that stretch reads DKVKAARRAQLQREAENMREALRAKERELASLK.

Its subcellular location is the nucleus. Its function is as follows. GATA-type transcription repressor that regulates iron acquisition genes through specific binding the GATA sequence elements of target promoters. SreA targets include genes encoding a number of key iron-regulated factors such as the siderophore biosynthesis genes. Is dispensable for growth on keratin substrates. SreA represses the expression of hapX and the siderophore system during iron sufficient conditions by an iron-sensing mechanism, while hapX represses sreA and activates the siderophore system during iron-limiting conditions resulting in efficient iron uptake and inhibition of iron-consuming pathways. The sequence is that of GATA-type transcription factor sreA from Arthroderma benhamiae (strain ATCC MYA-4681 / CBS 112371) (Trichophyton mentagrophytes).